Consider the following 246-residue polypeptide: Aquaporin SIP1-1 (246 aa).

2 helical membrane-spanning segments follow: residues 13-33 (AAVTFLWVLCVSTLGASTAAV) and 45-65 (YALLVTVSLLSVLLFAFNLLC). The NPA 1 motif lies at 74–76 (NPT). Transmembrane regions (helical) follow at residues 95 to 115 (FPLALRFPAQAAGAVGGAMAI), 139 to 159 (GAAAELVLTFVITLAVLWIIV), and 166 to 186 (IVKTWMLSISTVCLVLTGAAY). An NPA 2 motif is present at residues 192 to 194 (NPA). The chain crosses the membrane as a helical span at residues 214-234 (VYWICPFVGAVLAAWVFRAVF).

The protein belongs to the MIP/aquaporin (TC 1.A.8) family. SIP (TC 1.A.8.10) subfamily. Expressed in roots, leaves and anthers.

The protein resides in the membrane. Functionally, aquaporins facilitate the transport of water and small neutral solutes across cell membranes. This chain is Aquaporin SIP1-1 (SIP1-1), found in Oryza sativa subsp. japonica (Rice).